A 493-amino-acid chain; its full sequence is uncharacterized protein (493 aa).

A helical transmembrane segment spans residues 10–30 (LVPSTRFALSLVMFFGCLVTY). Residues Asn-35, Asn-47, and Asn-69 are each glycosylated (N-linked (GlcNAc...) asparagine). The next 6 helical transmembrane spans lie at 85 to 105 (MVLS…GHLA), 112 to 132 (RVVF…PVAA), 144 to 164 (AAIG…WSVW), 175 to 195 (GVTY…SGFL), 205 to 225 (PSIF…WWYV), and 272 to 292 (AVWA…TMLV). Asn-305 is a glycosylation site (N-linked (GlcNAc...) asparagine). 4 consecutive transmembrane segments (helical) span residues 311 to 331 (AVAS…GVLA), 348 to 368 (AAML…GYCG), 375 to 395 (VIIF…GFVV), and 406 to 426 (GTVM…SPAV). N-linked (GlcNAc...) asparagine glycosylation is present at Asn-433. A helical membrane pass occupies residues 441–461 (MVLWLTAGILTIGALLFSIFA).

It belongs to the major facilitator superfamily. Sodium/anion cotransporter family.

The protein localises to the membrane. This is an uncharacterized protein from Caenorhabditis elegans.